A 432-amino-acid chain; its full sequence is Keratin, type I cytoskeletal 17 (432 aa).

The interval Met-1–Ser-24 is disordered. A head region spans residues Met-1 to Gly-83. A phosphoserine mark is found at Ser-12 and Ser-13. Residue Lys-15 forms a Glycyl lysine isopeptide (Lys-Gly) (interchain with G-Cter in SUMO1); alternate linkage. Lys-15 participates in a covalent cross-link: Glycyl lysine isopeptide (Lys-Gly) (interchain with G-Cter in SUMO2); alternate. Ser-25, Ser-32, and Ser-39 each carry phosphoserine. Ser-44 is modified (phosphoserine; by RPS6KA1). A coil 1A region spans residues Glu-84 to Tyr-120. Residues Glu-84 to Leu-395 enclose the IF rod domain. Positions Val-102–Ile-116 are peptide epitope S1; induces T-cell and keratinocyte proliferation and IFN-gamma production. Thr-110 carries the post-translational modification Phosphothreonine. The tract at residues Gln-121–Ile-138 is linker 1. Positions Glu-139 to Arg-230 are coil 1B. Positions Ala-153–Asp-167 are peptide epitope S2; induces T-cell proliferation and IFN-gamma production. The segment at Gly-231–Ser-250 is linker 12. Residues Arg-251–Asp-392 form a coil 2 region. Lys-278 participates in a covalent cross-link: Glycyl lysine isopeptide (Lys-Gly) (interchain with G-Cter in SUMO2). Phosphothreonine is present on Thr-279. Position 323 is a phosphoserine (Ser-323). The peptide epitope S4; induces T-cell and keratinocyte proliferation and IFN-gamma production stretch occupies residues Glu-332 to Ile-346. Positions Ala-393 to Arg-432 are tail. Glycyl lysine isopeptide (Lys-Gly) (interchain with G-Cter in SUMO1); alternate cross-links involve residues Lys-399, Lys-400, and Lys-419. Glycyl lysine isopeptide (Lys-Gly) (interchain with G-Cter in SUMO2); alternate cross-links involve residues Lys-399, Lys-400, and Lys-419.

The protein belongs to the intermediate filament family. As to quaternary structure, heterodimer of a type I and a type II keratin. KRT17 associates with KRT6 isomers (KRT6A or KRT6B). Interacts with TRADD and SFN. In terms of processing, phosphorylation at Ser-44 occurs in a growth- and stress-dependent fashion in skin keratinocytes, it has no effect on filament organization. In terms of tissue distribution, expressed in the outer root sheath and medulla region of hair follicle specifically from eyebrow and beard, digital pulp, nail matrix and nail bed epithelium, mucosal stratified squamous epithelia and in basal cells of oral epithelium, palmoplantar epidermis and sweat and mammary glands. Also expressed in myoepithelium of prostate, basal layer of urinary bladder, cambial cells of sebaceous gland and in exocervix (at protein level).

It is found in the cytoplasm. In terms of biological role, type I keratin involved in the formation and maintenance of various skin appendages, specifically in determining shape and orientation of hair. Required for the correct growth of hair follicles, in particular for the persistence of the anagen (growth) state. Modulates the function of TNF-alpha in the specific context of hair cycling. Regulates protein synthesis and epithelial cell growth through binding to the adapter protein SFN and by stimulating Akt/mTOR pathway. Involved in tissue repair. May be a marker of basal cell differentiation in complex epithelia and therefore indicative of a certain type of epithelial 'stem cells'. Acts as a promoter of epithelial proliferation by acting a regulator of immune response in skin: promotes Th1/Th17-dominated immune environment contributing to the development of basaloid skin tumors. May act as an autoantigen in the immunopathogenesis of psoriasis, with certain peptide regions being a major target for autoreactive T-cells and hence causing their proliferation. The chain is Keratin, type I cytoskeletal 17 (KRT17) from Homo sapiens (Human).